The primary structure comprises 309 residues: Lactamase-like protein aptB (309 aa).

4 residues coordinate Zn(2+): His97, His99, Asp101, and His102. The active-site Proton donor/acceptor is the Asp101.

This sequence belongs to the metallo-beta-lactamase superfamily. Requires Zn(2+) as cofactor.

It catalyses the reaction 2,3,6,8,9-pentahydroxy-1-oxo-3-(2-oxopropyl)-1,2,3,4-tetrahydroanthracene-2-carboxyl-[ACP] + H2O = 2,3,6,8,9-pentahydroxy-1-oxo-3-(2-oxopropyl)-1,2,3,4-tetrahydroanthracene-2-carboxylate + holo-[ACP] + H(+). It participates in secondary metabolite biosynthesis. Lactamase-like protein; part of the gene cluster that mediates the biosynthesis of asperthecin, an anthraquinone pigment. Polyketide synthase (PKS) aptA catalyzes the formation of the aromatic polyketide from acetyl coenzyme A and seven malonyl coenzyme A molecules. Polyketide is subsequently hydrolyzed by the action of aptB into endocrocin-9-anthrone. Endocrocin-9-anthrone is then oxidized into endocrocin by aptC. Endocrocin is likely to decarboxylate spontaneously to form emodin which explains why there is no decarboxylase in the asperthecin biosynthesis cluster. Finally, aptC or another endogenous oxygenase catalyzes additional oxidation steps to form asperthecin. In Emericella nidulans (strain FGSC A4 / ATCC 38163 / CBS 112.46 / NRRL 194 / M139) (Aspergillus nidulans), this protein is Lactamase-like protein aptB.